We begin with the raw amino-acid sequence, 330 residues long: MKDKAYDITIIGGGPIGLFAAFYAGLRGVTVKIIESLSELGGQPAILYPEKMIYDIPAYPSLTGAELTENLIKQLSRFEDRTTICLKEEVLTFDKVKGGFSIRTNKAEHFSKAIIIACGNGAFAPRTLGLESEENFADHNLFYNVHQLDQFAGQKVVICGGGDSAVDWALALEDIAESVTVVHRRDAFRAHEHSVELLKASTVNLLTPYVPKALKGIGNLAEKLVIQKVKEDEVLELELDSLIVSFGFSTSNKNLKNWNLDYKRSSITVSPLFQTSQEGIFAIGDAAAYKGKVDLIATGFGEAPTAVNQAINYIYPDRDNRVVHSTSLID.

E35, Q43, Y48, V90, F123, D285, and T326 together coordinate FAD.

It belongs to the ferredoxin--NADP reductase type 2 family. In terms of assembly, homodimer. It depends on FAD as a cofactor.

It carries out the reaction 2 reduced [2Fe-2S]-[ferredoxin] + NADP(+) + H(+) = 2 oxidized [2Fe-2S]-[ferredoxin] + NADPH. This chain is Ferredoxin--NADP reductase, found in Streptococcus pyogenes serotype M2 (strain MGAS10270).